Here is a 452-residue protein sequence, read N- to C-terminus: MKLFGTSGIRMKNLTPEIAYKVGFAVSQIAKNVVVGRDTRTTGDLIRNSLFAGLLNGGAEIVDIGIVPTPTLGYSARNYDMGIMITASHNPSEYNGIKLFNKDGTSFRPEQEQNIEDIIYNKKNQKRVSWNSIKKVWTDESALKKYSDFILDSVEINKNFSVVVDCANSAGCVASPYLFTDVGAHVISVNGHIDGRFIGRSPEPNEKNLQDTMHMIKGLNENNKGNKYIGIAHDGDADRMIAIDEKGRLTDFDKLLAVFSRYMAEKTGTKTIITTVDASMAIEEYLKDLNVNVIRTKVGDVAVSDELNKHDDAIFGGEPSGTWIHKDIHLTPDGILSGLRLLEMMEFYDKKLYELIDDVPCYSNLREKLPCPDDKKIIVMDFVIKNGENIFDAEVETIDGARFSLDDGWVLIRPSGTEPFVRVRVEAKNDIIAKELLEKGIKLVKDGLNEKK.

Ser88 functions as the Phosphoserine intermediate in the catalytic mechanism. Residues Ser88, Asp234, Asp236, and Asp238 each contribute to the Mg(2+) site. Phosphoserine is present on Ser88.

The protein belongs to the phosphohexose mutase family. Mg(2+) is required as a cofactor. In terms of processing, activated by phosphorylation.

The enzyme catalyses alpha-D-glucosamine 1-phosphate = D-glucosamine 6-phosphate. Catalyzes the conversion of glucosamine-6-phosphate to glucosamine-1-phosphate. The sequence is that of Phosphoglucosamine mutase from Methanococcus aeolicus (strain ATCC BAA-1280 / DSM 17508 / OCM 812 / Nankai-3).